Here is a 240-residue protein sequence, read N- to C-terminus: Uridylate kinase (240 aa).

13 to 16 serves as a coordination point for ATP; sequence KLSG. The segment at 21–26 is involved in allosteric activation by GTP; sequence GEKGFG. G55 contributes to the UMP binding site. Positions 56 and 60 each coordinate ATP. UMP contacts are provided by residues D75 and 136-143; that span reads IGNPYFST. ATP is bound by residues N164, Y170, and D173.

It belongs to the UMP kinase family. As to quaternary structure, homohexamer.

The protein resides in the cytoplasm. It carries out the reaction UMP + ATP = UDP + ADP. It functions in the pathway pyrimidine metabolism; CTP biosynthesis via de novo pathway; UDP from UMP (UMPK route): step 1/1. Its activity is regulated as follows. Allosterically activated by GTP. Inhibited by UTP. Its function is as follows. Catalyzes the reversible phosphorylation of UMP to UDP. The polypeptide is Uridylate kinase (Staphylococcus aureus (strain USA300)).